Consider the following 523-residue polypeptide: Bifunctional purine biosynthesis protein PurH (523 aa).

Residues 1 to 149 (MSDPVIKRAL…KNNESVTVIT (149 aa)) enclose the MGS-like domain.

This sequence belongs to the PurH family.

It catalyses the reaction (6R)-10-formyltetrahydrofolate + 5-amino-1-(5-phospho-beta-D-ribosyl)imidazole-4-carboxamide = 5-formamido-1-(5-phospho-D-ribosyl)imidazole-4-carboxamide + (6S)-5,6,7,8-tetrahydrofolate. It carries out the reaction IMP + H2O = 5-formamido-1-(5-phospho-D-ribosyl)imidazole-4-carboxamide. The protein operates within purine metabolism; IMP biosynthesis via de novo pathway; 5-formamido-1-(5-phospho-D-ribosyl)imidazole-4-carboxamide from 5-amino-1-(5-phospho-D-ribosyl)imidazole-4-carboxamide (10-formyl THF route): step 1/1. Its pathway is purine metabolism; IMP biosynthesis via de novo pathway; IMP from 5-formamido-1-(5-phospho-D-ribosyl)imidazole-4-carboxamide: step 1/1. The sequence is that of Bifunctional purine biosynthesis protein PurH from Chlorobaculum parvum (strain DSM 263 / NCIMB 8327) (Chlorobium vibrioforme subsp. thiosulfatophilum).